Consider the following 140-residue polypeptide: Calcium-binding protein B (140 aa).

EF-hand domains lie at 38 to 73 and 74 to 109; these read ATLS…INQP and KTYL…KTSS. Residues D51, N53, S55, D57, and E62 each coordinate Ca(2+).

This is Calcium-binding protein B (cbpB) from Dictyostelium discoideum (Social amoeba).